We begin with the raw amino-acid sequence, 187 residues long: uncharacterized protein (187 aa).

This is an uncharacterized protein from Homo sapiens (Human).